The chain runs to 279 residues: Putative pyruvate, phosphate dikinase regulatory protein (279 aa).

Position 153–160 (153–160 (GVSRTSKT)) interacts with ADP.

It belongs to the pyruvate, phosphate/water dikinase regulatory protein family. PDRP subfamily.

The catalysed reaction is N(tele)-phospho-L-histidyl/L-threonyl-[pyruvate, phosphate dikinase] + ADP = N(tele)-phospho-L-histidyl/O-phospho-L-threonyl-[pyruvate, phosphate dikinase] + AMP + H(+). The enzyme catalyses N(tele)-phospho-L-histidyl/O-phospho-L-threonyl-[pyruvate, phosphate dikinase] + phosphate + H(+) = N(tele)-phospho-L-histidyl/L-threonyl-[pyruvate, phosphate dikinase] + diphosphate. In terms of biological role, bifunctional serine/threonine kinase and phosphorylase involved in the regulation of the pyruvate, phosphate dikinase (PPDK) by catalyzing its phosphorylation/dephosphorylation. This is Putative pyruvate, phosphate dikinase regulatory protein from Rhodopseudomonas palustris (strain HaA2).